The sequence spans 202 residues: uncharacterized protein (202 aa).

An HTH tetR-type domain is found at 14–74 (NAKTERILDV…AMADRYFQRC (61 aa)).

This is an uncharacterized protein from Xanthobacter autotrophicus.